The primary structure comprises 704 residues: MLKLFSAFRKDKIWDFDGGIHPPEMKTQSNGTPLRQVPLAPRFVIPLKQHIGAEGELCVSVGDRVLRGQALTRGRGRMLPVHAPTSGTVIAIAPHSTAHPSALAELSVIIDADGEDRWIEREGWSDYRAHSREALIERIHQYGVAGLGGAGFPTGVKLQGGGDKITTLIINAAECEPYITADDRLMQDCAAQIVEGIRILAHILQPREVLIGIEDNKPQAISMLRAVLADAHDISLRVIPTKYPSGGAKQLTQILTGKQVPHGGRSSDIGVLMQNVGTAYAVKRAVVDGEPITERVVTLTGEAVSRPGNVWARLGTPVRHLLNDAGFCPSADQMVIMGGPLMGFTLPWLDVPVVKITNCLLAPSVAEMGAPQEEKSCIRCSACADACPADLLPQQLYWFSKGQQHDKATAHHIADCIECGACAWVCPSNIPLVQYFRQEKAEINAIRLEEKRAAEAKARFEARQARLEREKAARLARHKSAAVQPAAKDQDAIAAALARVKEKQAQATQPVVIQAGSQPDNSAVIAAREARKAQARAKQAAHPMADSAIPGNDPSKAAVEAAIARAKARKQEQQAGSEPVEAVDPRKAAVEAAIARAKARKQEQQTGSEPAEPIDPRKAAVEAAIVRAKARKQEQQTGSEPAEPIDPRKAAVEAAIARAKARKQEQQTGSEPAEPADPRKAAVAAAIARVQAKKAAQQQVVNED.

4Fe-4S ferredoxin-type domains follow at residues 368 to 397 and 407 to 436; these read MGAP…QQLY and KATA…VQYF. Residues Cys377, Cys380, Cys383, Cys387, Cys416, Cys419, Cys422, and Cys426 each contribute to the [4Fe-4S] cluster site. Residues 536–685 are disordered; it reads RAKQAAHPMA…ADPRKAAVAA (150 aa). Over residues 556–565 the composition is skewed to low complexity; sequence KAAVEAAIAR.

Belongs to the 4Fe4S bacterial-type ferredoxin family. RnfC subfamily. As to quaternary structure, the complex is composed of six subunits: RsxA, RsxB, RsxC, RsxD, RsxE and RsxG. [4Fe-4S] cluster is required as a cofactor.

The protein localises to the cell inner membrane. Part of a membrane-bound complex that couples electron transfer with translocation of ions across the membrane. Required to maintain the reduced state of SoxR. In Salmonella dublin (strain CT_02021853), this protein is Ion-translocating oxidoreductase complex subunit C.